The following is a 414-amino-acid chain: Succinylornithine transaminase (414 aa).

Lys260 carries the N6-(pyridoxal phosphate)lysine modification.

The protein belongs to the class-III pyridoxal-phosphate-dependent aminotransferase family. AstC subfamily. Pyridoxal 5'-phosphate serves as cofactor.

The catalysed reaction is N(2)-succinyl-L-ornithine + 2-oxoglutarate = N-succinyl-L-glutamate 5-semialdehyde + L-glutamate. It participates in amino-acid degradation; L-arginine degradation via AST pathway; L-glutamate and succinate from L-arginine: step 3/5. In terms of biological role, catalyzes the transamination of N(2)-succinylornithine and alpha-ketoglutarate into N(2)-succinylglutamate semialdehyde and glutamate. Can also act as an acetylornithine aminotransferase. This is Succinylornithine transaminase from Yersinia pseudotuberculosis serotype I (strain IP32953).